A 204-amino-acid polypeptide reads, in one-letter code: Ribosomal RNA small subunit methyltransferase J (204 aa).

S-adenosyl-L-methionine is bound by residues 55 to 56, 71 to 72, and D123; these read RD and ER.

It belongs to the methyltransferase superfamily. RsmJ family.

Its subcellular location is the cytoplasm. It catalyses the reaction guanosine(1516) in 16S rRNA + S-adenosyl-L-methionine = N(2)-methylguanosine(1516) in 16S rRNA + S-adenosyl-L-homocysteine + H(+). Its function is as follows. Specifically methylates the guanosine in position 1516 of 16S rRNA. The polypeptide is Ribosomal RNA small subunit methyltransferase J (Rhodopseudomonas palustris (strain ATCC BAA-98 / CGA009)).